The following is a 178-amino-acid chain: Small ribosomal subunit protein uS5 (178 aa).

In terms of domain architecture, S5 DRBM spans 15 to 78 (FEEKIIEIRR…SAAKRNIVEV (64 aa)).

It belongs to the universal ribosomal protein uS5 family. Part of the 30S ribosomal subunit. Contacts proteins S4 and S8.

In terms of biological role, with S4 and S12 plays an important role in translational accuracy. Located at the back of the 30S subunit body where it stabilizes the conformation of the head with respect to the body. The polypeptide is Small ribosomal subunit protein uS5 (Thermotoga maritima (strain ATCC 43589 / DSM 3109 / JCM 10099 / NBRC 100826 / MSB8)).